A 257-amino-acid polypeptide reads, in one-letter code: Acetylglutamate kinase (257 aa).

Residues 41-42, Arg63, and Asn156 contribute to the substrate site; that span reads GG.

Belongs to the acetylglutamate kinase family. ArgB subfamily.

Its subcellular location is the cytoplasm. The enzyme catalyses N-acetyl-L-glutamate + ATP = N-acetyl-L-glutamyl 5-phosphate + ADP. Its pathway is amino-acid biosynthesis; L-arginine biosynthesis; N(2)-acetyl-L-ornithine from L-glutamate: step 2/4. Its function is as follows. Catalyzes the ATP-dependent phosphorylation of N-acetyl-L-glutamate. This Geobacillus sp. (strain WCH70) protein is Acetylglutamate kinase.